Consider the following 484-residue polypeptide: MPSPSPEASSSMSQPGPPSRSPSPASSNPDAPEASHNKTFADLGISPELCRACASMGFKKPSDIQAEAIPHALEGKDIIGLAQTGSGKTAAFSLPILQTLWENPQPFFALVLAPTRELAYQISQQVTSLGSGIGVRTAVLVGGMDMMSQSIALSKRPHIIVATPGRLMDHLENTKGFSLKSLKYLVMDEADRLLDLDFGPIIDKILKVIPKERNTYLFSATMTTKVAKLQRASLNKPVRVEVSSKYSTVSTLLQHYLLLPLKNKDAYLLYLANELSSSSMMIFTRTVADSQRLSIILRRLGFPAIPLHGQMTQSLRLASLNKFKSGGRSILVATDVASRGLDIPLVDLVINYDMPTNSKDYVHRVGRTARAGRSGKSITLVTQYDVEILQRIESHIGKKMTSFDVDKEAVALLTDTVAKANREAALEMRESGTGGGGGKRGRDKGKRKTFGDGDDRDRDDDVVEAGVPRKKNKFTPGGKKKARK.

2 stretches are compositionally biased toward low complexity: residues 1 to 14 and 22 to 34; these read MPSPSPEASSSMSQ and PSPASSNPDAPEA. The disordered stretch occupies residues 1–38; the sequence is MPSPSPEASSSMSQPGPPSRSPSPASSNPDAPEASHNK. A Q motif motif is present at residues 38-66; that stretch reads KTFADLGISPELCRACASMGFKKPSDIQA. In terms of domain architecture, Helicase ATP-binding spans 69-240; the sequence is IPHALEGKDI…RASLNKPVRV (172 aa). 82–89 lines the ATP pocket; the sequence is AQTGSGKT. Positions 188 to 191 match the DEAD box motif; sequence DEAD. In terms of domain architecture, Helicase C-terminal spans 263 to 411; the sequence is NKDAYLLYLA…SFDVDKEAVA (149 aa). The interval 425–484 is disordered; that stretch reads ALEMRESGTGGGGGKRGRDKGKRKTFGDGDDRDRDDDVVEAGVPRKKNKFTPGGKKKARK. Basic residues-rich tracts occupy residues 439 to 448 and 468 to 484; these read KRGRDKGKRK and PRKKNKFTPGGKKKARK.

The protein belongs to the DEAD box helicase family. DDX47/RRP3 subfamily. As to quaternary structure, interacts with the SSU processome.

It localises to the nucleus. The enzyme catalyses ATP + H2O = ADP + phosphate + H(+). In terms of biological role, ATP-dependent rRNA helicase required for pre-ribosomal RNA processing. Involved in the maturation of the 35S-pre-rRNA and to its cleavage to mature 18S rRNA. In Cryptococcus neoformans var. neoformans serotype D (strain B-3501A) (Filobasidiella neoformans), this protein is ATP-dependent rRNA helicase RRP3.